Here is a 473-residue protein sequence, read N- to C-terminus: Double-stranded RNA-binding protein 7 (473 aa).

The segment covering 1-10 (MDMPPTPLPP) has biased composition (pro residues). The disordered stretch occupies residues 1 to 22 (MDMPPTPLPPETANTSPAPNGA). DRBM domains lie at 33–102 (VFKS…EIVK) and 118–185 (LCKN…AIQG). Basic and acidic residues-rich tracts occupy residues 286 to 307 (KRVE…ENQH), 317 to 327 (DEARVEQEPSR), and 416 to 427 (VDARVVKEESPR). Disordered regions lie at residues 286-329 (KRVE…SRDI) and 393-473 (QLNE…MSEE). Over residues 433–450 (EATNMKETPKNSAVCNSP) the composition is skewed to polar residues.

Binds double-stranded RNA. The protein is Double-stranded RNA-binding protein 7 (DRB7) of Oryza sativa subsp. japonica (Rice).